A 122-amino-acid chain; its full sequence is Small ribosomal subunit protein uS13 (122 aa).

The tract at residues 95–122 is disordered; the sequence is QLPVRGQRTHTNARTRKGKAKPIAGKKK.

It belongs to the universal ribosomal protein uS13 family. In terms of assembly, part of the 30S ribosomal subunit. Forms a loose heterodimer with protein S19. Forms two bridges to the 50S subunit in the 70S ribosome.

In terms of biological role, located at the top of the head of the 30S subunit, it contacts several helices of the 16S rRNA. In the 70S ribosome it contacts the 23S rRNA (bridge B1a) and protein L5 of the 50S subunit (bridge B1b), connecting the 2 subunits; these bridges are implicated in subunit movement. Contacts the tRNAs in the A and P-sites. In Beijerinckia indica subsp. indica (strain ATCC 9039 / DSM 1715 / NCIMB 8712), this protein is Small ribosomal subunit protein uS13.